The primary structure comprises 290 residues: Polyamine aminopropyltransferase (290 aa).

The region spanning 5–238 (QLWYEKLHSS…GIMTFAWASE (234 aa)) is the PABS domain. Gln33 contributes to the S-methyl-5'-thioadenosine binding site. The spermidine site is built by His64 and Asp88. Residues Glu108 and 140–141 (DG) contribute to the S-methyl-5'-thioadenosine site. Asp158 serves as the catalytic Proton acceptor. A spermidine-binding site is contributed by 158-161 (DSTD). Pro165 is a binding site for S-methyl-5'-thioadenosine.

It belongs to the spermidine/spermine synthase family. As to quaternary structure, homodimer or homotetramer.

It localises to the cytoplasm. It catalyses the reaction S-adenosyl 3-(methylsulfanyl)propylamine + putrescine = S-methyl-5'-thioadenosine + spermidine + H(+). Its pathway is amine and polyamine biosynthesis; spermidine biosynthesis; spermidine from putrescine: step 1/1. Catalyzes the irreversible transfer of a propylamine group from the amino donor S-adenosylmethioninamine (decarboxy-AdoMet) to putrescine (1,4-diaminobutane) to yield spermidine. In Hamiltonella defensa subsp. Acyrthosiphon pisum (strain 5AT), this protein is Polyamine aminopropyltransferase.